Consider the following 260-residue polypeptide: Chloride intracellular channel Clic (260 aa).

A helical transmembrane segment spans residues 42–66; sequence FCQEYFMDLYLLAELKTISLKVTTV.

It belongs to the chloride channel CLIC family. Expressed in cardiac tubes.

It localises to the mitochondrion. The protein resides in the membrane. Its function is as follows. Might insert into membranes and form chloride ion channels. Channel activity depends on the pH. May play a role in ethanol sensitivity. The chain is Chloride intracellular channel Clic from Drosophila melanogaster (Fruit fly).